The sequence spans 94 residues: Integration host factor subunit beta (94 aa).

It belongs to the bacterial histone-like protein family. Heterodimer of an alpha and a beta chain.

In terms of biological role, this protein is one of the two subunits of integration host factor, a specific DNA-binding protein that functions in genetic recombination as well as in transcriptional and translational control. The polypeptide is Integration host factor subunit beta (Actinobacillus succinogenes (strain ATCC 55618 / DSM 22257 / CCUG 43843 / 130Z)).